The primary structure comprises 262 residues: Small ribosomal subunit protein uS2 (262 aa).

The disordered stretch occupies residues 223 to 262; sequence KSLLEQDGGEQAAGEEVSQDEKDAVVAEAMSEEDFGEDEE. The segment covering 227-238 has biased composition (low complexity); sequence EQDGGEQAAGEE. A compositionally biased stretch (acidic residues) spans 252–262; it reads MSEEDFGEDEE.

The protein belongs to the universal ribosomal protein uS2 family.

The sequence is that of Small ribosomal subunit protein uS2 from Campylobacter concisus (strain 13826).